We begin with the raw amino-acid sequence, 322 residues long: Protein prune homolog 2 (322 aa).

Residues 1-110 (MDIHFEEGVL…SIPEYTAEEE (110 aa)) form a disordered region. A compositionally biased stretch (polar residues) spans 40 to 52 (PNINLSLDQSEGS). Acidic residues predominate over residues 57–80 (DNLDSPDEIDINVDELDTPDEADS). A CRAL-TRIO domain is found at 130 to 291 (DMKVIEPYRR…SIIKYDEEKS (162 aa)).

The protein resides in the cytoplasm. May play an important role in regulating differentiation, survival and aggressiveness of the tumor cells. The chain is Protein prune homolog 2 (Prune2) from Rattus norvegicus (Rat).